The primary structure comprises 1477 residues: Inositol hexakisphosphate and diphosphoinositol-pentakisphosphate kinase 1 (1477 aa).

Positions 27 to 47 (TRGLGMRPEESDSELLEDEED) are disordered. Acidic residues predominate over residues 37–47 (SDSELLEDEED). Residue 64 to 65 (KK) participates in substrate binding. ATP is bound by residues Arg145, Lys198, His205, Arg224, 248–251 (EEFM), and 257–259 (DVK). 224–225 (RK) contributes to the substrate binding site. Residues Lys259 and Arg273 each contribute to the substrate site. ATP contacts are provided by residues Ser275, Asp320, and 332 to 334 (DVN). 337-340 (SFVK) contributes to the substrate binding site. Positions 382 to 453 (PTTSGTMMEL…VLDITRLLLA (72 aa)) are polyphosphoinositide-binding domain. Positions 910–1016 (KGVEEEGSAP…PTEMKQSGLG (107 aa)) are disordered. Ser940 and Ser983 each carry phosphoserine. The span at 1001-1016 (FSSSRPPTEMKQSGLG) shows a compositional bias: polar residues. Phosphoserine occurs at positions 1033, 1069, 1141, and 1148. Disordered regions lie at residues 1131 to 1248 (HSNQ…KPCQ) and 1438 to 1477 (REEV…SFSH). Positions 1164–1182 (SSGPSSTVSSAGPSSPTAV) are enriched in low complexity. A compositionally biased stretch (polar residues) spans 1446-1460 (CPPSNANPQSQSLAP).

The protein belongs to the histidine acid phosphatase family. VIP1 subfamily.

The protein resides in the cytoplasm. It is found in the cytosol. It localises to the cell membrane. It carries out the reaction 1D-myo-inositol hexakisphosphate + ATP = 1-diphospho-1D-myo-inositol 2,3,4,5,6-pentakisphosphate + ADP. It catalyses the reaction 5-diphospho-1D-myo-inositol 1,2,3,4,6-pentakisphosphate + ATP + H(+) = 1,5-bis(diphospho)-1D-myo-inositol 2,3,4,6-tetrakisphosphate + ADP. Bifunctional inositol kinase that acts in concert with the IP6K kinases IP6K1, IP6K2 and IP6K3 to synthesize the diphosphate group-containing inositol pyrophosphates diphosphoinositol pentakisphosphate, PP-InsP5, and bis-diphosphoinositol tetrakisphosphate, (PP)2-InsP4. PP-InsP5 and (PP)2-InsP4, also respectively called InsP7 and InsP8, regulate a variety of cellular processes, including apoptosis, vesicle trafficking, cytoskeletal dynamics, exocytosis, insulin signaling and neutrophil activation. Phosphorylates inositol hexakisphosphate (InsP6) at position 1 to produce PP-InsP5 which is in turn phosphorylated by IP6Ks to produce (PP)2-InsP4. Alternatively, phosphorylates PP-InsP5 at position 1, produced by IP6Ks from InsP6, to produce (PP)2-InsP4. Activated when cells are exposed to hyperosmotic stress. This Bos taurus (Bovine) protein is Inositol hexakisphosphate and diphosphoinositol-pentakisphosphate kinase 1.